The chain runs to 829 residues: Genome polyprotein (829 aa).

Ser-2 is subject to N-acetylserine; by host. Residues Ser-2–Lys-23 are interaction with STAT1. The segment at Ser-2–Pro-58 is interaction with EIF2AK2/PKR. The interval Ser-2–Arg-59 is interaction with DDX3X. Residues Ser-2–Asn-75 are disordered. Residues Ser-2–Asn-168 are Cytoplasmic-facing. Short sequence motifs (nuclear localization signal) lie at residues Pro-5–Arg-13 and Pro-38–Arg-43. Over residues Pro-7–Asn-16 the composition is skewed to basic residues. A compositionally biased stretch (low complexity) spans Gly-32–Arg-47. Position 53 is a phosphoserine; by host (Ser-53). Short sequence motifs (nuclear localization signal) lie at residues Pro-58–Pro-64 and Pro-66–Pro-71. Basic residues predominate over residues Pro-58–Gly-73. A Phosphoserine; by host modification is found at Ser-99. The tract at residues Pro-112–Ala-152 is important for endoplasmic reticulum and mitochondrial localization. Ser-116 carries the post-translational modification Phosphoserine; by host PKA. The segment at Val-122–Ser-173 is interaction with APOA2. The interval Tyr-164 to Gly-167 is important for lipid droplets localization. Residues Leu-169–Ala-189 traverse the membrane as a helical segment. Residues Leu-178–Ala-191 constitute a propeptide, ER anchor for the core protein, removed in mature form by host signal peptidase. The Lumenal segment spans residues Ser-190 to Gly-358. Residues Asn-196, Asn-209, and Asn-234 are each glycosylated (N-linked (GlcNAc...) asparagine; by host). Residues Leu-265–Arg-296 are important for fusion. Residue Asn-305 is glycosylated (N-linked (GlcNAc...) asparagine; by host). The chain crosses the membrane as a helical span at residues Met-359–Ala-379. Over Gly-380–Leu-725 the chain is Lumenal. The tract at residues Thr-385–Val-411 is HVR1. Residues Asn-417, Asn-423, Asn-430, and Asn-448 are each glycosylated (N-linked (GlcNAc...) (high mannose) asparagine; by host). Disulfide bonds link Cys-429-Cys-552, Cys-452-Cys-459, Cys-486-Cys-494, and Cys-503-Cys-508. The tract at residues Tyr-474 to Gly-479 is HVR2. Positions Pro-480–Pro-493 are CD81-binding 1. N-linked (GlcNAc...) asparagine; by host glycosylation is present at Asn-540. Positions Pro-544–Gly-551 are CD81-binding 2. A glycan (N-linked (GlcNAc...) (high mannose) asparagine; by host) is linked at Asn-556. The cysteines at positions 564 and 569 are disulfide-linked. N-linked (GlcNAc...) (high mannose) asparagine; by host glycosylation occurs at Asn-576. Cystine bridges form between Cys-581–Cys-585, Cys-597–Cys-620, and Cys-607–Cys-644. Asn-623 and Asn-645 each carry an N-linked (GlcNAc...) (high mannose) asparagine; by host glycan. A disulfide bond links Cys-652 and Cys-677. The segment at Ser-660–Gln-671 is PKR/eIF2-alpha phosphorylation homology domain (PePHD). A helical membrane pass occupies residues Leu-726–Ala-746. The Lumenal portion of the chain corresponds to Ala-747 to Ala-757. A helical membrane pass occupies residues Ser-758–Leu-778. At Arg-779 to Lys-781 the chain is on the cytoplasmic side. The chain crosses the membrane as a helical span at residues Trp-782–Leu-803. The Lumenal portion of the chain corresponds to Pro-804–Glu-813. A helical membrane pass occupies residues Val-814 to Leu-829.

Belongs to the hepacivirus polyprotein family. Homooligomer. Interacts with E1 (via C-terminus). Interacts with the non-structural protein 5A. Interacts (via N-terminus) with host STAT1 (via SH2 domain); this interaction results in decreased STAT1 phosphorylation and ubiquitin-mediated proteasome-dependent STAT1 degradation, leading to decreased IFN-stimulated gene transcription. Interacts with host STAT3; this interaction constitutively activates STAT3. Interacts with host LTBR receptor. Interacts with host TNFRSF1A receptor and possibly induces apoptosis. Interacts with host HNRPK. Interacts with host YWHAE. Interacts with host UBE3A/E6AP. Interacts with host DDX3X. Interacts with host APOA2. Interacts with host RXRA protein. Interacts with host SP110 isoform 3/Sp110b; this interaction sequesters the transcriptional corepressor SP110 away from the nucleus. Interacts with host CREB3 nuclear transcription protein; this interaction triggers cell transformation. Interacts with host ACY3. Interacts with host C1QR1. Interacts with host RBM24; this interaction, which enhances the interaction of the mature core protein with 5'-UTR, may inhibit viral translation and favor replication. Interacts with host EIF2AK2/PKR; this interaction induces the autophosphorylation of EIF2AK2. Part of the viral assembly initiation complex composed of NS2, E1, E2, NS3, NS4A, NS5A and the mature core protein. As to quaternary structure, forms a heterodimer with envelope glycoprotein E2. Interacts with mature core protein. Interacts with protease NS2. The heterodimer E1/E2 interacts with host CLDN1; this interaction plays a role in viral entry into host cell. Interacts with host SPSB2 (via C-terminus). Part of the viral assembly initiation complex composed of NS2, E1, E2, NS3, NS4A, NS5A and the mature core protein. In terms of assembly, forms a heterodimer with envelope glycoprotein E1. Interacts with host CD81 and SCARB1 receptors; these interactions play a role in viral entry into host cell. Interacts with host EIF2AK2/PKR; this interaction inhibits EIF2AK2 and probably allows the virus to evade the innate immune response. Interacts with host CD209/DC-SIGN and CLEC4M/DC-SIGNR. Interact with host SPCS1; this interaction is essential for viral particle assembly. Interacts with protease NS2. The heterodimer E1/E2 interacts with host CLDN1; this interaction plays a role in viral entry into host cell. Part of the viral assembly initiation complex composed of NS2, E1, E2, NS3, NS4A, NS5A and the mature core protein. Homohexamer. Homoheptamer. Interacts with protease NS2. As to quaternary structure, homodimer. Interacts with host SPCS1; this interaction is essential for viral particle assembly. Interacts with envelope glycoprotein E1. Interacts with envelope glycoprotein E2. Interacts with viroporin p7. Interacts with serine protease/helicase NS3. Part of the replication complex composed of NS2, NS3, NS4A, NS4B, NS5A and the RNA-directed RNA polymerase embedded in an ER-derived membranous web. Part of the viral assembly initiation complex composed of NS2, E1, E2, NS3, NS4A, NS5A and the mature core protein. Zn(2+) is required as a cofactor. In terms of processing, specific enzymatic cleavages in vivo yield mature proteins. The structural proteins, core, E1, E2 and p7 are produced by proteolytic processing by host signal peptidases. The core protein precursor is synthesized as a 23 kDa, which is retained in the ER membrane through the hydrophobic signal peptide. Cleavage by the signal peptidase releases the 21 kDa mature core protein. The cleavage of the core protein precursor occurs between aminoacids 176 and 188 but the exact cleavage site is not known. Some degraded forms of the core protein appear as well during the course of infection. The other proteins (p7, NS2, NS3, NS4A, NS4B, NS5A and NS5B) are cleaved by the viral proteases. Autoprocessing between NS2 and NS3 is mediated by the NS2 cysteine protease catalytic domain and regulated by the NS3 N-terminal domain. Post-translationally, phosphorylated by host PKC and PKA. Ubiquitinated; mediated by UBE3A and leading to core protein subsequent proteasomal degradation. In terms of processing, highly N-glycosylated. Post-translationally, palmitoylation is required for NS2/3 autoprocessing and E2 recruitment to membranes.

It is found in the host endoplasmic reticulum membrane. Its subcellular location is the host mitochondrion membrane. The protein localises to the virion. The protein resides in the host cytoplasm. It localises to the host nucleus. It is found in the host lipid droplet. Its subcellular location is the virion membrane. The protein localises to the host mitochondrion. The protein resides in the host cell membrane. With respect to regulation, inhibited by the antiviral drug hexamethylene amiloride. Inhibition by amantadine appears to be genotype-dependent. Also inhibited by long-alkyl-chain iminosugar derivatives. Functionally, packages viral RNA to form a viral nucleocapsid, and promotes virion budding. Participates in the viral particle production as a result of its interaction with the non-structural protein 5A. Binds RNA and may function as a RNA chaperone to induce the RNA structural rearrangements taking place during virus replication. Modulates viral translation initiation by interacting with viral IRES and 40S ribosomal subunit. Affects various cell signaling pathways, host immunity and lipid metabolism. Prevents the establishment of cellular antiviral state by blocking the interferon-alpha/beta (IFN-alpha/beta) and IFN-gamma signaling pathways and by blocking the formation of phosphorylated STAT1 and promoting ubiquitin-mediated proteasome-dependent degradation of STAT1. Activates STAT3 leading to cellular transformation. Regulates the activity of cellular genes, including c-myc and c-fos. May repress the promoter of p53, and sequester CREB3 and SP110 isoform 3/Sp110b in the cytoplasm. Represses cell cycle negative regulating factor CDKN1A, thereby interrupting an important check point of normal cell cycle regulation. Targets transcription factors involved in the regulation of inflammatory responses and in the immune response: suppresses TNF-induced NF-kappa-B activation, and activates AP-1. Binds to dendritic cells (DCs) via C1QR1, resulting in down-regulation of T-lymphocytes proliferation. Alters lipid metabolism by interacting with hepatocellular proteins involved in lipid accumulation and storage. Induces up-regulation of FAS promoter activity, and thereby contributes to the increased triglyceride accumulation in hepatocytes (steatosis). Forms a heterodimer with envelope glycoprotein E2, which mediates virus attachment to the host cell, virion internalization through clathrin-dependent endocytosis and fusion with host membrane. Fusion with the host cell is most likely mediated by both E1 and E2, through conformational rearrangements of the heterodimer required for fusion rather than a classical class II fusion mechanism. E1/E2 heterodimer binds host apolipoproteins such as APOB and ApoE thereby forming a lipo-viro-particle (LVP). APOE associated to the LVP allows the initial virus attachment to cell surface receptors such as the heparan sulfate proteoglycans (HSPGs), syndecan-1 (SDC1), syndecan-1 (SDC2), the low-density lipoprotein receptor (LDLR) and scavenger receptor class B type I (SCARB1). The cholesterol transfer activity of SCARB1 allows E2 exposure and binding of E2 to SCARB1 and the tetraspanin CD81. E1/E2 heterodimer binding on CD81 activates the epithelial growth factor receptor (EGFR) signaling pathway. Diffusion of the complex E1-E2-EGFR-SCARB1-CD81 to the cell lateral membrane allows further interaction with Claudin 1 (CLDN1) and occludin (OCLN) to finally trigger HCV entry. Its function is as follows. Forms a heterodimer with envelope glycoprotein E1, which mediates virus attachment to the host cell, virion internalization through clathrin-dependent endocytosis and fusion with host membrane. Fusion with the host cell is most likely mediated by both E1 and E2, through conformational rearrangements of the heterodimer required for fusion rather than a classical class II fusion mechanism. The interaction between envelope glycoprotein E2 and host apolipoprotein E/APOE allows the proper assembly, maturation and infectivity of the viral particles. This interaction is probably promoted via the up-regulation of cellular autophagy by the virus. E1/E2 heterodimer binds host apolipoproteins such as APOB and APOE thereby forming a lipo-viro-particle (LVP). APOE associated to the LVP allows the initial virus attachment to cell surface receptors such as the heparan sulfate proteoglycans (HSPGs), syndecan-1 (SDC1), syndecan-1 (SDC2), the low-density lipoprotein receptor (LDLR) and scavenger receptor class B type I (SCARB1). The cholesterol transfer activity of SCARB1 allows E2 exposure and binding of E2 to SCARB1 and the tetraspanin CD81. E1/E2 heterodimer binding on CD81 activates the epithelial growth factor receptor (EGFR) signaling pathway. Diffusion of the complex E1-E2-EGFR-SCARB1-CD81 to the cell lateral membrane allows further interaction with Claudin 1 (CLDN1) and occludin (OCLN) to finally trigger HCV entry. Inhibits host EIF2AK2/PKR activation, preventing the establishment of an antiviral state. Viral ligand for CD209/DC-SIGN and CLEC4M/DC-SIGNR, which are respectively found on dendritic cells (DCs), and on liver sinusoidal endothelial cells and macrophage-like cells of lymph node sinuses. These interactions allow the capture of circulating HCV particles by these cells and subsequent facilitated transmission to permissive cells such as hepatocytes and lymphocyte subpopulations. In terms of biological role, ion channel protein that acts as a viroporin and plays an essential role in the assembly, envelopment and secretion of viral particles. Regulates the host cell secretory pathway, which induces the intracellular retention of viral glycoproteins and favors assembly of viral particles. Creates a pore in acidic organelles and releases Ca(2+) and H(+) in the cytoplasm of infected cells, leading to a productive viral infection. High levels of cytoplasmic Ca(2+) may trigger membrane trafficking and transport of viral ER-associated proteins to viroplasms, sites of viral genome replication. This ionic imbalance induces the assembly of the inflammasome complex, which triggers the maturation of pro-IL-1beta into IL-1beta through the action of caspase-1. Targets also host mitochondria and induces mitochondrial depolarization. In addition of its role as a viroporin, acts as a lipid raft adhesion factor. Functionally, cysteine protease required for the proteolytic auto-cleavage between the non-structural proteins NS2 and NS3. The N-terminus of NS3 is required for the function of NS2 protease (active region NS2-3). Promotes the initiation of viral particle assembly by mediating the interaction between structural and non-structural proteins. The protein is Genome polyprotein of Hepatitis C virus (isolate Glasgow) (HCV).